The primary structure comprises 40 residues: Photosystem II reaction center protein X (40 aa).

Residues 10–30 (WSLVWGTVIVVIPVTVGLVFI) form a helical membrane-spanning segment.

It belongs to the PsbX family. Type 1 subfamily. PSII is composed of 1 copy each of membrane proteins PsbA, PsbB, PsbC, PsbD, PsbE, PsbF, PsbH, PsbI, PsbJ, PsbK, PsbL, PsbM, PsbT, PsbX, PsbY, PsbZ, Psb30/Ycf12, peripheral proteins PsbO, CyanoQ (PsbQ), PsbU, PsbV and a large number of cofactors. It forms dimeric complexes.

It localises to the cellular thylakoid membrane. In terms of biological role, involved in the binding and/or turnover of quinones at the Q(B) site of photosystem II (PSII). PSII is a light-driven water plastoquinone oxidoreductase, using light energy to abstract electrons from H(2)O, generating a proton gradient subsequently used for ATP formation. The polypeptide is Photosystem II reaction center protein X (Crocosphaera subtropica (strain ATCC 51142 / BH68) (Cyanothece sp. (strain ATCC 51142))).